The sequence spans 259 residues: Deoxyribose-phosphate aldolase (259 aa).

Asp102 (proton donor/acceptor) is an active-site residue. Lys167 functions as the Schiff-base intermediate with acetaldehyde in the catalytic mechanism. Lys201 acts as the Proton donor/acceptor in catalysis.

Belongs to the DeoC/FbaB aldolase family. DeoC type 2 subfamily.

It is found in the cytoplasm. It carries out the reaction 2-deoxy-D-ribose 5-phosphate = D-glyceraldehyde 3-phosphate + acetaldehyde. It participates in carbohydrate degradation; 2-deoxy-D-ribose 1-phosphate degradation; D-glyceraldehyde 3-phosphate and acetaldehyde from 2-deoxy-alpha-D-ribose 1-phosphate: step 2/2. Catalyzes a reversible aldol reaction between acetaldehyde and D-glyceraldehyde 3-phosphate to generate 2-deoxy-D-ribose 5-phosphate. This chain is Deoxyribose-phosphate aldolase, found in Erwinia tasmaniensis (strain DSM 17950 / CFBP 7177 / CIP 109463 / NCPPB 4357 / Et1/99).